Reading from the N-terminus, the 757-residue chain is Probable phospholipase C20G8.02, mitochondrial (757 aa).

Residues 1–13 (MILYIVLPFYVRT) constitute a mitochondrion transit peptide. The segment at 289–330 (ESNSKPSTPVPTEELTSTTLLNDSSDPSDNFTPSNTESTIDL) is disordered. Polar residues predominate over residues 302–329 (ELTSTTLLNDSSDPSDNFTPSNTESTID). Ser524 is an active-site residue. A DDHD domain is found at 547–757 (LDFPVANFFA…LAHFILTQLL (211 aa)).

It belongs to the PA-PLA1 family.

It is found in the mitochondrion. In terms of biological role, probable phospholipase that hydrolyzes phosphatidic acid. The chain is Probable phospholipase C20G8.02, mitochondrial from Schizosaccharomyces pombe (strain 972 / ATCC 24843) (Fission yeast).